The chain runs to 269 residues: Capsid assembly scaffolding protein (269 aa).

Belongs to the T4likevirus capsid assembly scaffolding protein family.

The protein localises to the virion. In terms of biological role, scaffolding protein involved in the icosahedric procapsid assembly. Coassembles with the capsid proteins to form the procapsid, in which the scaffolding protein is found within the external shell of icosahedrally arranged capsid protein subunits. In a subsequent step the scaffolding protein molecules are cleaved by the viral protease and released, except for the internal peptide VII. Functionally, cleavage product of Gp22 that is incorporated into the mature phage head. This Escherichia phage AR1 (Bacteriophage AR1) protein is Capsid assembly scaffolding protein (22).